The sequence spans 779 residues: MSRFPAVAGRAPRRQEEGERPVELQEERPSAVRIADREEKGCTSQEGGTTPTFPIQKQRKKLIQAVRDNSFLIVTGNTGSGKTTQLPKYLYEAGFSQHGMIGVTQPRKVAAISVAQRVAEEMKCTLGSKVGYQVRFDDCSSKETAIKYMTDGCLLKHILGDPNLNKFSVIILDEAHERTLTTDILFGLLKKLFQDKSPNRKEHLKVVVMSATMELAKLSAFFGNCPIFDIPGRLYPVREKFCNLIGPRDRENTAYIQAIVKVTMDIHLNEMAGDILVFLTGQFEIEKSCELLFQMAESVDYDYDVQDTTLDGLLILPCYGSMTTDQQRRIFLPPPPGIRKCVISTNISATSLTIDGIRYVVDGGFVKQLNHNPRLGLDILEVVPISKSEALQRSGRAGRTASGKCFRIYSKDFWNQCMPDHVIPEIKRTSLTSVVLTLKCLAIHDVIRFPYLDPPNERLILEALKQLYQCDAIDRSGHVTRLGLSMVEFPLPPHLTCAVIRAASLDCEDLLLPIAAMLSVENVFIRPVDPEYQKEAEQKHRELAAKAGGFNDFATLAVIFEQCKSSGAPASWCQKHWIHWRCLFSAFRVEAQLRELIRKLKQQSDFPRETFEGPKHEVLRRCLCAGYFKNVARRSVGRTFCTMDGRGSPVHIHPSSALHEQETKLEWIIFHEVLVTTKVYARIVCPIRYEWVRDLLPKLHELNAHDLSSVARREMRDDARRKWTNKENVKQLKDGISKEVLKKMQRRNDDKSISDARARFLERKQQRIQDHSDTLKETG.

Positions 1 to 53 (MSRFPAVAGRAPRRQEEGERPVELQEERPSAVRIADREEKGCTSQEGGTTPTF) are disordered. Residues 13–41 (RRQEEGERPVELQEERPSAVRIADREEKG) show a composition bias toward basic and acidic residues. Residues 42-53 (CTSQEGGTTPTF) show a composition bias toward polar residues. The Helicase ATP-binding domain maps to 63-231 (IQAVRDNSFL…FGNCPIFDIP (169 aa)). 76–83 (GNTGSGKT) serves as a coordination point for ATP. A DEAH box motif is present at residues 173–176 (DEAH). Positions 263–442 (TMDIHLNEMA…SVVLTLKCLA (180 aa)) constitute a Helicase C-terminal domain.

It belongs to the DEAD box helicase family. DEAH subfamily.

The catalysed reaction is ATP + H2O = ADP + phosphate + H(+). Its function is as follows. Probable ATP-dependent RNA helicase. This chain is Probable ATP-dependent RNA helicase DHX40 (Dhx40), found in Rattus norvegicus (Rat).